Reading from the N-terminus, the 193-residue chain is Large ribosomal subunit protein uL5 (193 aa).

It belongs to the universal ribosomal protein uL5 family. In terms of assembly, part of the 50S ribosomal subunit; part of the 5S rRNA/L5/L18/L25 subcomplex. Contacts the 5S rRNA and the P site tRNA. Forms a bridge to the 30S subunit in the 70S ribosome.

Its function is as follows. This is one of the proteins that bind and probably mediate the attachment of the 5S RNA into the large ribosomal subunit, where it forms part of the central protuberance. In the 70S ribosome it contacts protein S13 of the 30S subunit (bridge B1b), connecting the 2 subunits; this bridge is implicated in subunit movement. Contacts the P site tRNA; the 5S rRNA and some of its associated proteins might help stabilize positioning of ribosome-bound tRNAs. In Pseudarthrobacter chlorophenolicus (strain ATCC 700700 / DSM 12829 / CIP 107037 / JCM 12360 / KCTC 9906 / NCIMB 13794 / A6) (Arthrobacter chlorophenolicus), this protein is Large ribosomal subunit protein uL5.